A 186-amino-acid chain; its full sequence is Putative inactive recombination-promoting nuclease-like protein YjiQ (186 aa).

It belongs to the Rpn/YhgA-like nuclease family.

In terms of biological role, this pseudogene is the C-terminal fragment of low activity DNA endonuclease RpnD which probably yields 3'-hydroxyl ends. The intact protein can be seen in this entry (AC B7NGZ6). Expression of the repaired protein increases the frequency of recA-independent recombination, but also decreases viability probably via DNA damage; in a RecA strain expression has no effect on viability but does induce the SOS repair response. May play a role in horizontal gene transfer. The protein is Putative inactive recombination-promoting nuclease-like protein YjiQ (yjiQ) of Escherichia coli (strain K12).